A 130-amino-acid chain; its full sequence is ATP synthase epsilon chain, chloroplastic (130 aa).

Belongs to the ATPase epsilon chain family. In terms of assembly, F-type ATPases have 2 components, CF(1) - the catalytic core - and CF(0) - the membrane proton channel. CF(1) has five subunits: alpha(3), beta(3), gamma(1), delta(1), epsilon(1). CF(0) has three main subunits: a, b and c.

The protein localises to the plastid. It is found in the chloroplast thylakoid membrane. Its function is as follows. Produces ATP from ADP in the presence of a proton gradient across the membrane. This Emiliania huxleyi (Coccolithophore) protein is ATP synthase epsilon chain, chloroplastic.